A 114-amino-acid polypeptide reads, in one-letter code: Iron-sulfur cluster insertion protein ErpA (114 aa).

3 residues coordinate iron-sulfur cluster: cysteine 42, cysteine 106, and cysteine 108.

Belongs to the HesB/IscA family. As to quaternary structure, homodimer. Iron-sulfur cluster is required as a cofactor.

In terms of biological role, required for insertion of 4Fe-4S clusters for at least IspG. The polypeptide is Iron-sulfur cluster insertion protein ErpA (Enterobacter sp. (strain 638)).